The chain runs to 758 residues: Glucan endo-1,3-beta-D-glucosidase (758 aa).

Positions 1–34 (MSHASRRRWRRATTSAATAALLCGALLTFPSAPA) form a signal peptide, tat-type signal. A beta-sandwich subdomain region spans residues 38 to 251 (VRLGSGSYTT…SGYASVALLP (214 aa)). Residues 38-704 (VRLGSGSYTT…QWLSTLAEFG (667 aa)) form the GH81 domain. Residues 252-342 (SPDDFDRYAP…EGDRFTTELT (91 aa)) are alpha/beta subdomain. The tract at residues 352-704 (TVDSADHQRL…QWLSTLAEFG (353 aa)) is (alpha/beta)6 barrel subdomain. The (1,3-beta-D-glucosyl)n site is built by Tyr382, Lys386, Asp457, His461, Asn532, Glu534, and Glu538. Asp457 is an active-site residue. Active-site residues include Glu534 and Glu538.

Belongs to the glycosyl hydrolase 81 family. In terms of processing, predicted to be exported by the Tat system. The position of the signal peptide cleavage has not been experimentally proven.

It is found in the secreted. It catalyses the reaction Hydrolysis of (1-&gt;3)-beta-D-glucosidic linkages in (1-&gt;3)-beta-D-glucans.. In terms of biological role, cleaves internal linkages in 1,3-beta-glucan. May contribute to biomass degradation by hydrolyzing the 1,3-beta-linked plant polymer callose that is present in decomposing plant tissue. The chain is Glucan endo-1,3-beta-D-glucosidase from Thermobifida fusca (strain YX).